The primary structure comprises 399 residues: Methylthioribose kinase (399 aa).

ATP is bound by residues N40, K57, and 111 to 113; that span reads EDL. D229 serves as a coordination point for substrate. 246 to 248 serves as a coordination point for ATP; it reads DAE. R344 serves as a coordination point for substrate.

The protein belongs to the methylthioribose kinase family. As to quaternary structure, homodimer.

It carries out the reaction 5-(methylsulfanyl)-D-ribose + ATP = 5-(methylsulfanyl)-alpha-D-ribose 1-phosphate + ADP + H(+). It functions in the pathway amino-acid biosynthesis; L-methionine biosynthesis via salvage pathway; S-methyl-5-thio-alpha-D-ribose 1-phosphate from S-methyl-5'-thioadenosine (hydrolase route): step 2/2. Functionally, catalyzes the phosphorylation of methylthioribose into methylthioribose-1-phosphate. This Enterobacter sp. (strain 638) protein is Methylthioribose kinase.